A 426-amino-acid polypeptide reads, in one-letter code: Cephalotocin receptor 2 (426 aa).

At 1–51 (MYQAMEVESTSPSGFFLDFYTQSTIPTTDFLNNTNSSHPIRDEKLVKIEIA) the chain is on the extracellular side. Residues Asn-32 and Asn-35 are each glycosylated (N-linked (GlcNAc...) asparagine). The chain crosses the membrane as a helical span at residues 52-72 (VLGTCFTLAIINNLCVLLVLL). At 73–84 (WRRKKVRRMQMF) the chain is on the cytoplasmic side. A helical transmembrane segment spans residues 85–105 (ILHLSIADLIVAFFNILPQLI). The Extracellular segment spans residues 106-120 (WDITFRFMAGDAMCR). An intrachain disulfide couples Cys-119 to Cys-198. A helical transmembrane segment spans residues 121 to 141 (FIKYAQMFSLYLSTYILIMTA). Residues 142–165 (VDRYRAICHPLSNQTWTPCMVYCK) are Cytoplasmic-facing. The chain crosses the membrane as a helical span at residues 166–186 (IFIAYAIATIFSIPQAILFQM). Topologically, residues 187 to 208 (QEVNEGSGIYDCWVHFEPAWVL) are extracellular. A helical transmembrane segment spans residues 209 to 229 (TAYALYIFFALYLIPILILFF). Topologically, residues 230–288 (TYGSICYTIWAKYRHAIKTKKDANTRYPQRRKKKGVILRTHSVHGFSKAKLNSVKLTFA) are cytoplasmic. The chain crosses the membrane as a helical span at residues 289–309 (VIVTYIICWSPFFVSQIWWLF). Topologically, residues 310–319 (DETVVGNAGV) are extracellular. The helical transmembrane segment at 320–340 (VVILLMACLNSCTNPWIYLIF) threads the bilayer. Topologically, residues 341 to 426 (NRNYISNVLP…DQFIYSDKTT (86 aa)) are cytoplasmic. The tract at residues 373-426 (GSVRRDSRKTSDPKRISESRRISDARRISGKTQKNNSSSPRKTSDQFIYSDKTT) is disordered. The span at 375–399 (VRRDSRKTSDPKRISESRRISDARR) shows a compositional bias: basic and acidic residues. Over residues 402-426 (GKTQKNNSSSPRKTSDQFIYSDKTT) the composition is skewed to polar residues.

This sequence belongs to the G-protein coupled receptor 1 family. Vasopressin/oxytocin receptor subfamily. Present in various peripheral tissues with highest expression in branchia and vas deferens. Very low expression detected in nervous system.

The protein localises to the cell membrane. Acts as a receptor for cephalotocin. The protein is Cephalotocin receptor 2 of Octopus vulgaris (Common octopus).